Here is a 598-residue protein sequence, read N- to C-terminus: Vacuolin-A (598 aa).

A coiled-coil region spans residues Ile482–Glu539.

This sequence belongs to the vacuolin family.

The protein resides in the endosome membrane. The protein localises to the lysosome. The sequence is that of Vacuolin-A (vacA) from Dictyostelium discoideum (Social amoeba).